The sequence spans 245 residues: Dof zinc finger protein DOF3.2 (245 aa).

Polar residues predominate over residues 15–26 (SCSTQDYQNQKK). Residues 15–41 (SCSTQDYQNQKKPLSATRPAPPEQSLR) are disordered. The Dof-type zinc finger occupies 40 to 94 (LRCPRCDSTNTKFCYYNNYSLSQPRYFCKSCRRYWTKGGILRNIPIGGAYRKHKR). Positions 42, 45, 67, and 70 each coordinate Zn(2+). Residues 91-118 (KHKRSSSATKSLRTTPEPTMTHDGKSFP) form a disordered region. The segment covering 96-108 (SSATKSLRTTPEP) has biased composition (polar residues).

Interacts with TCP14. The PEAR proteins (e.g. DOF2.4, DOF5.1, DOF3.2, DOF1.1, DOF5.6 and DOF5.3) form a short-range concentration gradient that peaks at protophloem sieve elements (PSE).

It is found in the nucleus. Its function is as follows. Transcription factor that negatively affects seed germination and opposes TCP14 function in the regulation of a specific set of abscisic acid-related genes. The PEAR proteins (e.g. DOF2.4, DOF5.1, DOF3.2, DOF1.1, DOF5.6 and DOF5.3) activate gene expression that promotes radial growth of protophloem sieve elements. The chain is Dof zinc finger protein DOF3.2 from Arabidopsis thaliana (Mouse-ear cress).